The chain runs to 96 residues: Large ribosomal subunit protein bL28 (96 aa).

The protein belongs to the bacterial ribosomal protein bL28 family.

This is Large ribosomal subunit protein bL28 from Parvibaculum lavamentivorans (strain DS-1 / DSM 13023 / NCIMB 13966).